A 168-amino-acid chain; its full sequence is Cell division inhibitor SulA (168 aa).

Residues 106-112 (ALLTGNY) are ftsZ binding. The interval 161-168 (KIHSYLYH) is lon protease binding.

It belongs to the SulA family. Interacts with FtsZ. Is rapidly cleaved and degraded by the Lon protease once DNA damage is repaired.

Its function is as follows. Component of the SOS system and an inhibitor of cell division. Accumulation of SulA causes rapid cessation of cell division and the appearance of long, non-septate filaments. In the presence of GTP, binds a polymerization-competent form of FtsZ in a 1:1 ratio, thus inhibiting FtsZ polymerization and therefore preventing it from participating in the assembly of the Z ring. This mechanism prevents the premature segregation of damaged DNA to daughter cells during cell division. This Yersinia pestis bv. Antiqua (strain Antiqua) protein is Cell division inhibitor SulA.